Reading from the N-terminus, the 130-residue chain is Small ribosomal subunit protein uS8 (130 aa).

It belongs to the universal ribosomal protein uS8 family. Part of the 30S ribosomal subunit. Contacts proteins S5 and S12.

Its function is as follows. One of the primary rRNA binding proteins, it binds directly to 16S rRNA central domain where it helps coordinate assembly of the platform of the 30S subunit. In Aliivibrio fischeri (strain MJ11) (Vibrio fischeri), this protein is Small ribosomal subunit protein uS8.